The following is a 505-amino-acid chain: Cytochrome c oxidase subunit 1 (505 aa).

A helical membrane pass occupies residues 14-34 (LLYLVFAFFGGLLGTSLSMLI). Ca(2+)-binding residues include E37 and G42. Transmembrane regions (helical) follow at residues 55-75 (VIIT…ALFG), 98-118 (NISF…TLVE), 143-163 (AILS…NMLV), 180-200 (LFVW…PVLA), 229-249 (LFWF…FGIV), and 261-281 (VFGL…GFIV). A Fe(II)-heme a-binding site is contributed by H60. Residues H235 and Y239 each contribute to the Cu cation site. A cross-link (1'-histidyl-3'-tyrosine (His-Tyr)) is located at residues 235 to 239 (HPEVY). Y239 contributes to the O2 binding site. Cu cation-binding residues include H284 and H285. Helical transmembrane passes span 302–322 (ATMI…ATIY) and 332–352 (MWFA…GVVL). Positions 362 and 363 each coordinate Mg(2+). H370 lines the heme a3 pocket. H372 is a Fe(II)-heme a binding site. The next 3 helical transmembrane spans lie at 374-394 (VLSM…GNLI), 408-428 (FWLL…LGLA), and 446-466 (AVSS…ATTF).

It belongs to the heme-copper respiratory oxidase family. As to quaternary structure, component of the cytochrome c oxidase (complex IV, CIV), a multisubunit enzyme composed of a catalytic core of 3 subunits and several supernumerary subunits. The complex exists as a monomer or a dimer and forms supercomplexes (SCs) in the inner mitochondrial membrane with ubiquinol-cytochrome c oxidoreductase (cytochrome b-c1 complex, complex III, CIII). Heme is required as a cofactor. Cu cation serves as cofactor.

The protein resides in the mitochondrion inner membrane. It catalyses the reaction 4 Fe(II)-[cytochrome c] + O2 + 8 H(+)(in) = 4 Fe(III)-[cytochrome c] + 2 H2O + 4 H(+)(out). Its pathway is energy metabolism; oxidative phosphorylation. In terms of biological role, component of the cytochrome c oxidase, the last enzyme in the mitochondrial electron transport chain which drives oxidative phosphorylation. The respiratory chain contains 3 multisubunit complexes succinate dehydrogenase (complex II, CII), ubiquinol-cytochrome c oxidoreductase (cytochrome b-c1 complex, complex III, CIII) and cytochrome c oxidase (complex IV, CIV), that cooperate to transfer electrons derived from NADH and succinate to molecular oxygen, creating an electrochemical gradient over the inner membrane that drives transmembrane transport and the ATP synthase. Cytochrome c oxidase is the component of the respiratory chain that catalyzes the reduction of oxygen to water. Electrons originating from reduced cytochrome c in the intermembrane space (IMS) are transferred via the dinuclear copper A center (CU(A)) of subunit 2 and heme A of subunit 1 to the active site in subunit 1, a binuclear center (BNC) formed by heme A3 and copper B (CU(B)). The BNC reduces molecular oxygen to 2 water molecules using 4 electrons from cytochrome c in the IMS and 4 protons from the mitochondrial matrix. The polypeptide is Cytochrome c oxidase subunit 1 (COX1) (Chlamydomonas reinhardtii (Chlamydomonas smithii)).